We begin with the raw amino-acid sequence, 71 residues long: Ubiquinol-cytochrome c reductase complex assembly factor 6 (71 aa).

Residues 1-8 lie on the Mitochondrial matrix side of the membrane; it reads MPAGVPMS. Residues 9-25 traverse the membrane as a helical; Signal-anchor for type II membrane protein segment; that stretch reads TYLKMLAASLLAMCAGA. Residues 26–71 are Mitochondrial intermembrane-facing; sequence EVVHRYYRPDLTIPEIPPKRGELKTELLGLKERKHKPQISQQEELK. The interval 52 to 71 is disordered; sequence LLGLKERKHKPQISQQEELK.

The protein belongs to the UQCC6 family. As to quaternary structure, interacts with UQCRC1. Interacts with UQCRQ. Interacts with UQCC5. Forms a complex, named COMB/coordinator of mitochondrial CYTB biogenesis, composed of UQCC1, UQCC2, UQCC4, UQCC5 and UQCC6; stabilizes nascent cytochrome b/MT-CYB and promotes its membrane insertion. Forms a complex, named COMA, composed of UQCC1, UQCC2 and UQCC4; activates MT-CYB translation. Forms a complex, named COMC, composed of UQCC1, UQCC2; UQCC3 and UQCC4; mediates MT-CYB hemylation and association with the first nuclear-encoded complex III subunit UQCRQ. Interacts with MT-CYB.

Its subcellular location is the mitochondrion inner membrane. Required for the assembly and stability of the mitochondrial ubiquinol-cytochrome c reductase complex (complex III (CIII) or cytochrome b-c1 complex), a multisubunit transmembrane complex that is part of the mitochondrial electron transport chain (ETC) which drives oxidative phosphorylation. Mediates early complex III biogenesis. Participates in regulating the levels of electron transport chain proteins, and therefore energy supply, in response to changes in energy demand. Also required for cytochrome c oxidase complex (complex IV) assembly. This Pongo abelii (Sumatran orangutan) protein is Ubiquinol-cytochrome c reductase complex assembly factor 6.